Here is a 476-residue protein sequence, read N- to C-terminus: Ribulose bisphosphate carboxylase large chain (476 aa).

The propeptide occupies 1 to 2 (MS). Residue P3 is modified to N-acetylproline. K14 bears the N6,N6,N6-trimethyllysine mark. N123 and T173 together coordinate substrate. The active-site Proton acceptor is the K175. Residue K177 coordinates substrate. Positions 201, 203, and 204 each coordinate Mg(2+). K201 carries the post-translational modification N6-carboxylysine. The active-site Proton acceptor is H294. R295, H327, and S379 together coordinate substrate.

It belongs to the RuBisCO large chain family. Type I subfamily. In terms of assembly, heterohexadecamer of 8 large chains and 8 small chains; disulfide-linked. The disulfide link is formed within the large subunit homodimers. Requires Mg(2+) as cofactor. In terms of processing, the disulfide bond which can form in the large chain dimeric partners within the hexadecamer appears to be associated with oxidative stress and protein turnover.

The protein resides in the plastid. It is found in the chloroplast. The catalysed reaction is 2 (2R)-3-phosphoglycerate + 2 H(+) = D-ribulose 1,5-bisphosphate + CO2 + H2O. It carries out the reaction D-ribulose 1,5-bisphosphate + O2 = 2-phosphoglycolate + (2R)-3-phosphoglycerate + 2 H(+). Its function is as follows. RuBisCO catalyzes two reactions: the carboxylation of D-ribulose 1,5-bisphosphate, the primary event in carbon dioxide fixation, as well as the oxidative fragmentation of the pentose substrate in the photorespiration process. Both reactions occur simultaneously and in competition at the same active site. The protein is Ribulose bisphosphate carboxylase large chain of Setaria italica (Foxtail millet).